The sequence spans 469 residues: Probable Xaa-Pro aminopeptidase PEPP (469 aa).

Mn(2+) contacts are provided by Asp-265, Asp-276, Glu-399, and Glu-439.

Belongs to the peptidase M24B family. Requires Mn(2+) as cofactor.

The catalysed reaction is Release of any N-terminal amino acid, including proline, that is linked to proline, even from a dipeptide or tripeptide.. In terms of biological role, catalyzes the removal of a penultimate prolyl residue from the N-termini of peptides. The chain is Probable Xaa-Pro aminopeptidase PEPP (PEPP) from Coccidioides posadasii (strain C735) (Valley fever fungus).